A 345-amino-acid polypeptide reads, in one-letter code: Biotin synthase (345 aa).

The 219-residue stretch at 38–256 (RQVQVSTLLS…IAVARIMMPA (219 aa)) folds into the Radical SAM core domain. [4Fe-4S] cluster is bound by residues Cys-53, Cys-57, and Cys-60. [2Fe-2S] cluster is bound by residues Cys-97, Cys-128, Cys-188, and Arg-260.

The protein belongs to the radical SAM superfamily. Biotin synthase family. Homodimer. [4Fe-4S] cluster is required as a cofactor. It depends on [2Fe-2S] cluster as a cofactor.

The catalysed reaction is (4R,5S)-dethiobiotin + (sulfur carrier)-SH + 2 reduced [2Fe-2S]-[ferredoxin] + 2 S-adenosyl-L-methionine = (sulfur carrier)-H + biotin + 2 5'-deoxyadenosine + 2 L-methionine + 2 oxidized [2Fe-2S]-[ferredoxin]. It functions in the pathway cofactor biosynthesis; biotin biosynthesis; biotin from 7,8-diaminononanoate: step 2/2. In terms of biological role, catalyzes the conversion of dethiobiotin (DTB) to biotin by the insertion of a sulfur atom into dethiobiotin via a radical-based mechanism. In Pectobacterium atrosepticum (strain SCRI 1043 / ATCC BAA-672) (Erwinia carotovora subsp. atroseptica), this protein is Biotin synthase.